The following is a 60-amino-acid chain: Large ribosomal subunit protein bL32 (60 aa).

The segment covering 1–23 (MAKHPVPKKKTSKSKRDMRRSHH) has biased composition (basic residues). The disordered stretch occupies residues 1–26 (MAKHPVPKKKTSKSKRDMRRSHHALT).

The protein belongs to the bacterial ribosomal protein bL32 family.

The protein is Large ribosomal subunit protein bL32 of Deinococcus deserti (strain DSM 17065 / CIP 109153 / LMG 22923 / VCD115).